Consider the following 272-residue polypeptide: HMP-PP phosphatase (272 aa).

Asp-8 functions as the Nucleophile in the catalytic mechanism. Residues Asp-8, Asp-10, and Asp-212 each contribute to the Mg(2+) site.

Belongs to the HAD-like hydrolase superfamily. Cof family. The cofactor is Mg(2+).

It carries out the reaction 4-amino-2-methyl-5-(diphosphooxymethyl)pyrimidine + H2O = 4-amino-2-methyl-5-(phosphooxymethyl)pyrimidine + phosphate + H(+). Its function is as follows. Catalyzes the hydrolysis of 4-amino-2-methyl-5-hydroxymethylpyrimidine pyrophosphate (HMP-PP) to 4-amino-2-methyl-5-hydroxymethylpyrimidine phosphate (HMP-P). The protein is HMP-PP phosphatase of Citrobacter koseri (strain ATCC BAA-895 / CDC 4225-83 / SGSC4696).